We begin with the raw amino-acid sequence, 547 residues long: Chaperonin GroEL (547 aa).

ATP contacts are provided by residues 30–33 (TLGP), K51, 87–91 (DGTTT), G415, 479–481 (NAA), and D495.

This sequence belongs to the chaperonin (HSP60) family. Forms a cylinder of 14 subunits composed of two heptameric rings stacked back-to-back. Interacts with the co-chaperonin GroES.

It is found in the cytoplasm. It catalyses the reaction ATP + H2O + a folded polypeptide = ADP + phosphate + an unfolded polypeptide.. Its function is as follows. Together with its co-chaperonin GroES, plays an essential role in assisting protein folding. The GroEL-GroES system forms a nano-cage that allows encapsulation of the non-native substrate proteins and provides a physical environment optimized to promote and accelerate protein folding. In Pseudomonas syringae pv. syringae (strain B728a), this protein is Chaperonin GroEL.